Consider the following 500-residue polypeptide: Inner membrane transporter YjeM (500 aa).

Over 1–7 (MPHTIKK) the chain is Cytoplasmic. A helical membrane pass occupies residues 8–28 (MSLIGLILMIFTSVFGFANSP). Residues 29 to 37 (SAYYLMGYS) lie on the Periplasmic side of the membrane. A helical membrane pass occupies residues 38 to 58 (AIPFYIFSALLFFIPFALMMA). At 59 to 82 (EMGAAYRKEEGGIYSWMNNSVGPR) the chain is on the cytoplasmic side. A helical transmembrane segment spans residues 83–103 (FAFIGTFMWFSSYIIWMVSTS). Over 104–132 (AKVWVPFSTFLYGSDMTQHWRIAGLEPTQ) the chain is Periplasmic. Residues 133 to 153 (VVGLLAVAWMILVTVVASKGI) traverse the membrane as a helical segment. The Cytoplasmic segment spans residues 154-163 (NKIARITAVG). A helical membrane pass occupies residues 164 to 184 (GIAVMCLNLVLLLVSITILLL). Residues 185–209 (NGGHFAQDINFLASPNPGYQSGLAM) lie on the Periplasmic side of the membrane. Residues 210–230 (LSFVVFAIFAYGGIEAVGGLV) traverse the membrane as a helical segment. Topologically, residues 231 to 243 (DKTENPEKNFAKG) are cytoplasmic. Residues 244–264 (IVFAAIVISIGYSLAIFLWGV) form a helical membrane-spanning segment. Topologically, residues 265–319 (STNWQQVLSNGSVNLGNITYVLMKSLGMTLGNALHLSPEASLSLGVWFARITGLS) are periplasmic. Residues 320–340 (MFLAYTGAFFTLCYSPLKAII) form a helical membrane-spanning segment. Residues 341–369 (QGTPKALWPEPMTRLNAMGMPSIAMWMQC) lie on the Cytoplasmic side of the membrane. Residues 370-390 (GLVTVFILLVSFGGGTASAFF) form a helical membrane-spanning segment. Over 391–394 (NKLT) the chain is Periplasmic. Residues 395-415 (LMANVSMTLPYLFLALAFPFF) form a helical membrane-spanning segment. At 416-433 (KARQDLDRPFVIFKTHLS) the chain is on the cytoplasmic side. Residues 434 to 454 (AMIATVVVVLVVTFANVFTII) form a helical membrane-spanning segment. Topologically, residues 455-462 (QPVVEAGD) are periplasmic. Residues 463–483 (WDSTLWMIGGPVFFSLLAMAI) form a helical membrane-spanning segment. Topologically, residues 484-500 (YQNYCSRVAKNPQWAVE) are cytoplasmic.

The protein belongs to the amino acid-polyamine-organocation (APC) superfamily.

Its subcellular location is the cell inner membrane. In Escherichia coli (strain K12), this protein is Inner membrane transporter YjeM (yjeM).